Here is a 414-residue protein sequence, read N- to C-terminus: D-mannose isomerase (414 aa).

Catalysis depends on proton donor/acceptor residues histidine 255 and histidine 390.

Belongs to the N-acylglucosamine 2-epimerase family. Monomer.

The enzyme catalyses D-mannose = D-fructose. With respect to regulation, strongly inhibited by Ag(2+), Cu(2+) and cetyltrimethyl ammonium bromide (CTAB). Functionally, catalyzes the reversible isomerization of D-mannose to D-fructose. Shows high specific activity towards mannose and fructose, and has no detectable activity towards other monosaccharides and disaccharides. This Pseudomonas cannabina pv. alisalensis protein is D-mannose isomerase.